The primary structure comprises 120 residues: MASQQGLQERRRQRLRFQLRRKSGGRPRLSVFRSSKHIHAQIIDDAQGRTLASASTLEKTLRDAGKTGADVSAATVIGKLIAERGVAAGVKTVVFDRGSYLYHGRVKALAEAAREGGLSF.

This sequence belongs to the universal ribosomal protein uL18 family. As to quaternary structure, part of the 50S ribosomal subunit; part of the 5S rRNA/L5/L18/L25 subcomplex. Contacts the 5S and 23S rRNAs.

Functionally, this is one of the proteins that bind and probably mediate the attachment of the 5S RNA into the large ribosomal subunit, where it forms part of the central protuberance. The polypeptide is Large ribosomal subunit protein uL18 (Gluconobacter oxydans (strain 621H) (Gluconobacter suboxydans)).